Here is a 493-residue protein sequence, read N- to C-terminus: Leucine-rich repeat-containing protein 14 (493 aa).

An LRR 1; degenerate repeat occupies 111–146; it reads KHTLRVLDMTGLLDDGVEQDPGTMSMWDCTAAVART. Residues 194–218 form an LRR 2; degenerate repeat; that stretch reads RLCCRDLRAEDLPMRNTVALLQLLD. An LRR 3; degenerate repeat occupies 219-246; that stretch reads AGCLRRIDLRFNNLGLRGLSVIIPHVAR. One copy of the LRR 4; degenerate repeat lies at 247 to 282; sequence FQHLASLRLHYVHGDSRQPSVDGEDNFRYFLAQMGR. 5 LRR repeats span residues 283-307, 308-339, 340-360, 364-391, and 392-416; these read FICL…LSTL, QRPL…AHLK, KLDL…QGLL, AATL…TLTR, and CASL…LLRD.

It belongs to the PRAME family. LRRC14 subfamily. Interacts with IKBKB; disrupts IKBKB-IKBKG interaction preventing I-kappa-B-kinase (IKK) core complex formation and leading to a decrease of IKBKB phosphorylation and NF-kappaB activation. Interacts with CHUK.

The protein resides in the cytoplasm. Functionally, negatively regulates Toll-like receptor-mediated NF-kappa-B signaling by disrupting IKK core complex formation through interaction with IKBKB. The sequence is that of Leucine-rich repeat-containing protein 14 from Rattus norvegicus (Rat).